We begin with the raw amino-acid sequence, 96 residues long: MTNLEDKLSASIKTENKDTIAPASTPAKPAARSAAPETTKPASTGAKPATRTAAKKPVARATTTKPAVSKSSKPSADDIQVPAHDTSTHPRRVWPD.

The segment covering 1 to 18 (MTNLEDKLSASIKTENKD) has biased composition (basic and acidic residues). Residues 1 to 96 (MTNLEDKLSA…STHPRRVWPD (96 aa)) are disordered. A compositionally biased stretch (low complexity) spans 59–74 (ARATTTKPAVSKSSKP).

As to quaternary structure, monomer, associates with McdA:DNA. Interacts with shell components of the carboxysome.

It is found in the carboxysome. McdA and McdB together mediate carboxysome positioning on the nucleoid and to prevent their aggregation in the cell. Undergoes liquid-liquid phase separation at pH 7.0 in the presence of crowders polyethylene glycol or Ficoll. McdA is an ATPase that forms dynamic gradients on the nucleoid in response to adapter protein McdB, which associates with carboxysomes. The interplay between McdA gradients on the nucleoid and McdB-bound carboxysomes result in the equal spacing of Cbs along the cell length. Stimulates the ATPase activity of McdA, causing McdA to be released from DNA. In terms of biological role, incorrect positioning (aggregation) of carboxysomes results in reduced CO(2) fixation by encapsulated form 1 ribulose-1,5-bisphosphate carboxylase (RuBisCO, cbbL/cbbS), which leads to slower growth. The chain is Maintenance of carboxysome distribution protein B from Halothiobacillus neapolitanus (strain ATCC 23641 / c2) (Thiobacillus neapolitanus).